The following is a 141-amino-acid chain: Transcriptional regulator MraZ (141 aa).

2 SpoVT-AbrB domains span residues 5–47 and 76–119; these read TFNI…KPQD and ANFV…DKKL.

This sequence belongs to the MraZ family. In terms of assembly, homooctamer. Forms a ring.

It is found in the cytoplasm. Its subcellular location is the nucleoid. This chain is Transcriptional regulator MraZ, found in Mycoplasma pneumoniae (strain ATCC 29342 / M129 / Subtype 1) (Mycoplasmoides pneumoniae).